The primary structure comprises 96 residues: Fluoride-specific ion channel FluC 1 (96 aa).

2 helical membrane-spanning segments follow: residues 4-24 (LIQGLGVGAGAALGVCVRLAL) and 26-46 (LWLGDSAWPILTINVLGAFLM). Residues Gly61 and Thr64 each contribute to the Na(+) site. A helical transmembrane segment spans residues 69 to 89 (MMLNDVSFYFFTAVGCILAWL).

The protein belongs to the fluoride channel Fluc/FEX (TC 1.A.43) family.

Its subcellular location is the cell membrane. The enzyme catalyses fluoride(in) = fluoride(out). With respect to regulation, na(+) is not transported, but it plays an essential structural role and its presence is essential for fluoride channel function. In terms of biological role, fluoride-specific ion channel. Important for reducing fluoride concentration in the cell, thus reducing its toxicity. The protein is Fluoride-specific ion channel FluC 1 of Corynebacterium glutamicum (strain ATCC 13032 / DSM 20300 / JCM 1318 / BCRC 11384 / CCUG 27702 / LMG 3730 / NBRC 12168 / NCIMB 10025 / NRRL B-2784 / 534).